The following is a 149-amino-acid chain: Immunoglobulin kappa chain variable 6-17 (149 aa).

The first 29 residues, 1-29 (MHHTSMGIKMESQIQVFVFVFLWLSGVDG), serve as a signal peptide directing secretion. Repeats lie at residues 26-35 (GVDGDIVMTQ) and 38-47 (GVDGDIVMTQ). The framework-1 stretch occupies residues 42-64 (DIVMTQSHKFMSTSVGDRVSITC). The complementarity-determining-1 stretch occupies residues 65–75 (KASQDVSTTVA). The interval 76 to 90 (WYQQKPGQSPKLLIY) is framework-2. Residues 91–97 (SASYRYT) are complementarity-determining-2. The framework-3 stretch occupies residues 98–129 (GVPDRFTGSGSGTDFTFTISSVQAEDLAVYYC). The segment at 130 to 138 (QQHYSTPPT) is complementarity-determining-3. The interval 139-148 (FGGGTKLEIK) is framework-4.

The polypeptide is Immunoglobulin kappa chain variable 6-17 (Mus musculus (Mouse)).